Here is a 213-residue protein sequence, read N- to C-terminus: High frequency lysogenization protein HflD homolog (213 aa).

The stretch at 79 to 122 forms a coiled coil; sequence QGLNAELTRYTLSLMVLERKLSSAKGALNTLGDRINGLQRQLDH.

This sequence belongs to the HflD family.

It is found in the cytoplasm. Its subcellular location is the cell inner membrane. The sequence is that of High frequency lysogenization protein HflD homolog from Salmonella typhi.